The sequence spans 197 residues: Cell division protein SepF (197 aa).

2 disordered regions span residues 38 to 72 and 164 to 197; these read MPTPLPEESAPAPRRLPENPTVASNFAMNSNTTPT and LSREETPATPAAPARPAAPAPAWSDEMTPMAQAQ. Over residues 58-72 the composition is skewed to polar residues; that stretch reads TVASNFAMNSNTTPT. A compositionally biased stretch (low complexity) spans 170 to 185; it reads PATPAAPARPAAPAPA.

This sequence belongs to the SepF family. In terms of assembly, homodimer. Interacts with FtsZ.

It localises to the cytoplasm. Cell division protein that is part of the divisome complex and is recruited early to the Z-ring. Probably stimulates Z-ring formation, perhaps through the cross-linking of FtsZ protofilaments. Its function overlaps with FtsA. The sequence is that of Cell division protein SepF from Picosynechococcus sp. (strain ATCC 27264 / PCC 7002 / PR-6) (Agmenellum quadruplicatum).